Reading from the N-terminus, the 271-residue chain is Phosphate import ATP-binding protein PstB 2 (271 aa).

One can recognise an ABC transporter domain in the interval 25–266 (MATEDLHVYY…PQQKQTEDYI (242 aa)). 57-64 (GPSGCGKS) serves as a coordination point for ATP.

Belongs to the ABC transporter superfamily. Phosphate importer (TC 3.A.1.7) family. The complex is composed of two ATP-binding proteins (PstB), two transmembrane proteins (PstC and PstA) and a solute-binding protein (PstS).

It localises to the cell membrane. It carries out the reaction phosphate(out) + ATP + H2O = ADP + 2 phosphate(in) + H(+). Functionally, part of the ABC transporter complex PstSACB involved in phosphate import. Responsible for energy coupling to the transport system. This chain is Phosphate import ATP-binding protein PstB 2, found in Listeria monocytogenes serotype 4b (strain F2365).